Consider the following 360-residue polypeptide: S-adenosylmethionine decarboxylase proenzyme (360 aa).

Active-site residues include Glu13 and Glu16. Residue Ser73 is the Schiff-base intermediate with substrate; via pyruvic acid of the active site. Ser73 is subject to Pyruvic acid (Ser); by autocatalysis. The active-site Proton donor; for catalytic activity is Cys87. Active-site proton acceptor; for processing activity residues include Ser236 and His249.

It belongs to the eukaryotic AdoMetDC family. Pyruvate is required as a cofactor. In terms of processing, is synthesized initially as an inactive proenzyme. Formation of the active enzyme involves a self-maturation process in which the active site pyruvoyl group is generated from an internal serine residue via an autocatalytic post-translational modification. Two non-identical subunits are generated from the proenzyme in this reaction, and the pyruvate is formed at the N-terminus of the alpha chain, which is derived from the carboxyl end of the proenzyme. The post-translation cleavage follows an unusual pathway, termed non-hydrolytic serinolysis, in which the side chain hydroxyl group of the serine supplies its oxygen atom to form the C-terminus of the beta chain, while the remainder of the serine residue undergoes an oxidative deamination to produce ammonia and the pyruvoyl group blocking the N-terminus of the alpha chain. In terms of tissue distribution, stolon, also expressed in leaves, stems and roots.

It catalyses the reaction S-adenosyl-L-methionine + H(+) = S-adenosyl 3-(methylsulfanyl)propylamine + CO2. Its pathway is amine and polyamine biosynthesis; S-adenosylmethioninamine biosynthesis; S-adenosylmethioninamine from S-adenosyl-L-methionine: step 1/1. The protein is S-adenosylmethionine decarboxylase proenzyme (SAMDC) of Solanum tuberosum (Potato).